We begin with the raw amino-acid sequence, 281 residues long: Pantothenate synthetase (281 aa).

30 to 37 (MGYLHEGH) contacts ATP. His37 functions as the Proton donor in the catalytic mechanism. (R)-pantoate is bound at residue Gln61. Beta-alanine is bound at residue Gln61. 147 to 150 (GEKD) lines the ATP pocket. Position 153 (Gln153) interacts with (R)-pantoate. Residues Ile176 and 184-187 (KSSR) each bind ATP.

Belongs to the pantothenate synthetase family. In terms of assembly, homodimer.

The protein resides in the cytoplasm. The catalysed reaction is (R)-pantoate + beta-alanine + ATP = (R)-pantothenate + AMP + diphosphate + H(+). It participates in cofactor biosynthesis; (R)-pantothenate biosynthesis; (R)-pantothenate from (R)-pantoate and beta-alanine: step 1/1. In terms of biological role, catalyzes the condensation of pantoate with beta-alanine in an ATP-dependent reaction via a pantoyl-adenylate intermediate. In Clostridium botulinum (strain Okra / Type B1), this protein is Pantothenate synthetase.